We begin with the raw amino-acid sequence, 438 residues long: Enolase (438 aa).

Substrate-binding residues include His159 and Glu168. The active-site Proton donor is Glu211. Mg(2+)-binding residues include Asp246, Glu297, and Asp322. Substrate contacts are provided by Glu297 and Asp322. Lys347 acts as the Proton acceptor in catalysis. Substrate is bound by residues 374–377 (SHRS) and Lys398.

This sequence belongs to the enolase family. As to quaternary structure, homodimer. Mg(2+) serves as cofactor.

The protein resides in the cytoplasm. The enzyme catalyses (2R)-2-phosphoglycerate = phosphoenolpyruvate + H2O. It participates in carbohydrate degradation; glycolysis; pyruvate from D-glyceraldehyde 3-phosphate: step 4/5. The chain is Enolase (enoA) from Penicillium citrinum.